The sequence spans 240 residues: Uridylate kinase (240 aa).

13-16 contributes to the ATP binding site; the sequence is KFSG. UMP is bound at residue glycine 55. 2 residues coordinate ATP: glycine 56 and arginine 60. UMP-binding positions include aspartate 76 and 137-144; that span reads TGNPFFTT. ATP contacts are provided by threonine 164, tyrosine 170, and aspartate 173.

It belongs to the UMP kinase family. In terms of assembly, homohexamer.

The protein localises to the cytoplasm. The enzyme catalyses UMP + ATP = UDP + ADP. It functions in the pathway pyrimidine metabolism; CTP biosynthesis via de novo pathway; UDP from UMP (UMPK route): step 1/1. Its activity is regulated as follows. Inhibited by UTP. Functionally, catalyzes the reversible phosphorylation of UMP to UDP. This is Uridylate kinase from Helicobacter acinonychis (strain Sheeba).